The primary structure comprises 421 residues: uncharacterized protein (421 aa).

CBS domains follow at residues 13–74 (MTKD…VRSL), 74–133 (LMYK…MKDT), 139–195 (MTRN…PKKK), and 217–274 (MNTP…KGAM).

This is an uncharacterized protein from Methanocaldococcus jannaschii (strain ATCC 43067 / DSM 2661 / JAL-1 / JCM 10045 / NBRC 100440) (Methanococcus jannaschii).